Consider the following 395-residue polypeptide: Flap endonuclease 1 (395 aa).

An N-domain region spans residues 1-108; it reads MGILGLSKLL…DELEMRRQKA (108 aa). Asp34 serves as a coordination point for Mg(2+). Arg74 is a DNA binding site. Mg(2+) is bound by residues Asp90, Glu162, Glu164, Asp183, and Asp185. The I-domain stretch occupies residues 126-257; it reads MMEKMSKRTV…QKAWEGIQRY (132 aa). Position 162 (Glu162) interacts with DNA. Gly235 and Asp237 together coordinate DNA. Asp237 lines the Mg(2+) pocket. The interval 340–348 is interaction with PCNA; the sequence is TQGRLDSFF.

The protein belongs to the XPG/RAD2 endonuclease family. FEN1 subfamily. Interacts with PCNA. Three molecules of FEN1 bind to one PCNA trimer with each molecule binding to one PCNA monomer. PCNA stimulates the nuclease activity without altering cleavage specificity. Requires Mg(2+) as cofactor. Post-translationally, phosphorylated. Phosphorylation upon DNA damage induces relocalization to the nuclear plasma.

The protein localises to the nucleus. It is found in the nucleolus. It localises to the nucleoplasm. Its subcellular location is the mitochondrion. Structure-specific nuclease with 5'-flap endonuclease and 5'-3' exonuclease activities involved in DNA replication and repair. During DNA replication, cleaves the 5'-overhanging flap structure that is generated by displacement synthesis when DNA polymerase encounters the 5'-end of a downstream Okazaki fragment. It enters the flap from the 5'-end and then tracks to cleave the flap base, leaving a nick for ligation. Also involved in the long patch base excision repair (LP-BER) pathway, by cleaving within the apurinic/apyrimidinic (AP) site-terminated flap. Acts as a genome stabilization factor that prevents flaps from equilibrating into structures that lead to duplications and deletions. Also possesses 5'-3' exonuclease activity on nicked or gapped double-stranded DNA, and exhibits RNase H activity. Also involved in replication and repair of rDNA and in repairing mitochondrial DNA. The chain is Flap endonuclease 1 from Leishmania infantum.